We begin with the raw amino-acid sequence, 261 residues long: F-actin-capping protein subunit alpha (261 aa).

Belongs to the F-actin-capping protein alpha subunit family. In terms of assembly, heterodimer of an alpha and a beta subunit.

In terms of biological role, F-actin-capping proteins bind in a Ca(2+)-independent manner to the fast growing ends of actin filaments (barbed end) thereby blocking the exchange of subunits at these ends. Unlike other capping proteins (such as gelsolin and severin), these proteins do not sever actin filaments. The protein is F-actin-capping protein subunit alpha (CAP1) of Eremothecium gossypii (strain ATCC 10895 / CBS 109.51 / FGSC 9923 / NRRL Y-1056) (Yeast).